The primary structure comprises 211 residues: ATP phosphoribosyltransferase (211 aa).

The protein belongs to the ATP phosphoribosyltransferase family. Short subfamily. In terms of assembly, heteromultimer composed of HisG and HisZ subunits.

It is found in the cytoplasm. The catalysed reaction is 1-(5-phospho-beta-D-ribosyl)-ATP + diphosphate = 5-phospho-alpha-D-ribose 1-diphosphate + ATP. It functions in the pathway amino-acid biosynthesis; L-histidine biosynthesis; L-histidine from 5-phospho-alpha-D-ribose 1-diphosphate: step 1/9. Functionally, catalyzes the condensation of ATP and 5-phosphoribose 1-diphosphate to form N'-(5'-phosphoribosyl)-ATP (PR-ATP). Has a crucial role in the pathway because the rate of histidine biosynthesis seems to be controlled primarily by regulation of HisG enzymatic activity. In Bacillus cereus (strain ATCC 10987 / NRS 248), this protein is ATP phosphoribosyltransferase.